Consider the following 1064-residue polypeptide: Importin-13 homolog A (1064 aa).

The region spanning 40–109 (ALPQIQQWLI…LDNLLLFLKT (70 aa)) is the Importin N-terminal domain. Disordered stretches follow at residues 695–722 (TTQQ…NNNN) and 839–860 (NNKK…NENN). Low complexity predominate over residues 700 to 722 (NNNNNNNNNNNNNNNNNNNNNNN).

This sequence belongs to the importin beta family. As to quaternary structure, forms a complex with an importin alpha subunit.

The protein localises to the cytoplasm. The protein resides in the nucleus envelope. In terms of biological role, required for nuclear protein import and mediates docking of import substrate to distinct nucleoporins. In Dictyostelium discoideum (Social amoeba), this protein is Importin-13 homolog A (ipo13A).